The chain runs to 93 residues: Parbolysin P3 (93 aa).

Cystine bridges form between C16/C37, C22/C33, and C47/C60.

The protein belongs to the worm cytolysin family. In terms of tissue distribution, localized within the skin and proboscis and are most readily isolated from body mucus secretions.

The protein localises to the secreted. In terms of biological role, cytolysin that shows hemolytic activity (on bovine erythrocytes, HC(50)=5.75 mg/ml). This hemolytic activity is completely inhibited by small unilamelar vesicles composed of PC/PG, PC/PI and PC/PS in 1:1 molar ratios (with at least 100 mg/ml concentration). This Parborlasia corrugatus (Antarctic nemertean worm) protein is Parbolysin P3.